A 280-amino-acid chain; its full sequence is Ribose-phosphate pyrophosphokinase (280 aa).

Residues 32-34 (DGE) and 89-90 (RQ) each bind ATP. Mg(2+)-binding residues include His-122 and Asp-160. Residue Lys-183 is part of the active site. Residues Arg-185, Asp-209, and 213–217 (STGGT) contribute to the D-ribose 5-phosphate site.

The protein belongs to the ribose-phosphate pyrophosphokinase family. Class III (archaeal) subfamily. The cofactor is Mg(2+).

It is found in the cytoplasm. The catalysed reaction is D-ribose 5-phosphate + ATP = 5-phospho-alpha-D-ribose 1-diphosphate + AMP + H(+). Its pathway is metabolic intermediate biosynthesis; 5-phospho-alpha-D-ribose 1-diphosphate biosynthesis; 5-phospho-alpha-D-ribose 1-diphosphate from D-ribose 5-phosphate (route I): step 1/1. Activated by Co(2+) and Ni(2+) ions, however Mg(2+) ion shows almost no significant effect on the activity. Equally inhibited by ADP, CTP and GTP, while dTTP and UTP are less inhibitory. Functionally, involved in the biosynthesis of the central metabolite phospho-alpha-D-ribosyl-1-pyrophosphate (PRPP) via the transfer of pyrophosphoryl group from ATP to 1-hydroxyl of ribose-5-phosphate (Rib-5-P). It can also use CTP and GTP as substrates in addition to ATP. This chain is Ribose-phosphate pyrophosphokinase, found in Thermococcus kodakarensis (strain ATCC BAA-918 / JCM 12380 / KOD1) (Pyrococcus kodakaraensis (strain KOD1)).